Reading from the N-terminus, the 109-residue chain is Large ribosomal subunit protein uL24 (109 aa).

Belongs to the universal ribosomal protein uL24 family. As to quaternary structure, part of the 50S ribosomal subunit.

Functionally, one of two assembly initiator proteins, it binds directly to the 5'-end of the 23S rRNA, where it nucleates assembly of the 50S subunit. In terms of biological role, one of the proteins that surrounds the polypeptide exit tunnel on the outside of the subunit. The chain is Large ribosomal subunit protein uL24 from Mesoplasma florum (strain ATCC 33453 / NBRC 100688 / NCTC 11704 / L1) (Acholeplasma florum).